We begin with the raw amino-acid sequence, 284 residues long: Bifunctional protein FolD (284 aa).

Residues 166–168 (GAS) and I232 contribute to the NADP(+) site.

This sequence belongs to the tetrahydrofolate dehydrogenase/cyclohydrolase family. Homodimer.

It catalyses the reaction (6R)-5,10-methylene-5,6,7,8-tetrahydrofolate + NADP(+) = (6R)-5,10-methenyltetrahydrofolate + NADPH. The catalysed reaction is (6R)-5,10-methenyltetrahydrofolate + H2O = (6R)-10-formyltetrahydrofolate + H(+). It functions in the pathway one-carbon metabolism; tetrahydrofolate interconversion. Its function is as follows. Catalyzes the oxidation of 5,10-methylenetetrahydrofolate to 5,10-methenyltetrahydrofolate and then the hydrolysis of 5,10-methenyltetrahydrofolate to 10-formyltetrahydrofolate. The sequence is that of Bifunctional protein FolD from Pseudomonas putida (strain W619).